The following is a 126-amino-acid chain: Glycine cleavage system H protein (126 aa).

One can recognise a Lipoyl-binding domain in the interval 22–104 (VAYVGITDYA…YGKGWLIKIS (83 aa)). Position 63 is an N6-lipoyllysine (lysine 63).

This sequence belongs to the GcvH family. In terms of assembly, the glycine cleavage system is composed of four proteins: P, T, L and H. (R)-lipoate serves as cofactor.

Functionally, the glycine cleavage system catalyzes the degradation of glycine. The H protein shuttles the methylamine group of glycine from the P protein to the T protein. This Parabacteroides distasonis (strain ATCC 8503 / DSM 20701 / CIP 104284 / JCM 5825 / NCTC 11152) protein is Glycine cleavage system H protein.